Consider the following 166-residue polypeptide: Ribonuclease H (166 aa).

In terms of domain architecture, RNase H type-1 spans 10-151 (KRVRVDMFTD…ADELARRGTS (142 aa)). Mg(2+) contacts are provided by D19, E57, D79, and D143. The segment covering 145–157 (LARRGTSEARQGK) has biased composition (basic and acidic residues). A disordered region spans residues 145-166 (LARRGTSEARQGKVDGQSSTIL).

The protein belongs to the RNase H family. In terms of assembly, monomer. Requires Mg(2+) as cofactor.

The protein resides in the cytoplasm. It catalyses the reaction Endonucleolytic cleavage to 5'-phosphomonoester.. Endonuclease that specifically degrades the RNA of RNA-DNA hybrids. The protein is Ribonuclease H of Rhodospirillum rubrum (strain ATCC 11170 / ATH 1.1.1 / DSM 467 / LMG 4362 / NCIMB 8255 / S1).